A 521-amino-acid chain; its full sequence is GMP synthase [glutamine-hydrolyzing] (521 aa).

The region spanning 5-203 (KILILDFGSQ…VHEICGCGND (199 aa)) is the Glutamine amidotransferase type-1 domain. C82 functions as the Nucleophile in the catalytic mechanism. Catalysis depends on residues H177 and E179. Positions 204–396 (WNMPDYISEA…LGLPHDMVYR (193 aa)) constitute a GMPS ATP-PPase domain. 231–237 (SGGVDSS) is an ATP binding site.

As to quaternary structure, homodimer.

The catalysed reaction is XMP + L-glutamine + ATP + H2O = GMP + L-glutamate + AMP + diphosphate + 2 H(+). It participates in purine metabolism; GMP biosynthesis; GMP from XMP (L-Gln route): step 1/1. Its function is as follows. Catalyzes the synthesis of GMP from XMP. This is GMP synthase [glutamine-hydrolyzing] from Azoarcus sp. (strain BH72).